A 175-amino-acid chain; its full sequence is ATP synthase subunit d, mitochondrial (175 aa).

N-acetylserine is present on serine 2.

It belongs to the ATPase d subunit family.

The protein localises to the mitochondrion inner membrane. In terms of biological role, mitochondrial membrane ATP synthase (F(1)F(0) ATP synthase or Complex V) produces ATP from ADP in the presence of a proton gradient across the membrane which is generated by electron transport complexes of the respiratory chain. F-type ATPases consist of two structural domains, F(1) - containing the extramembraneous catalytic core, and F(0) - containing the membrane proton channel, linked together by a central stalk and a peripheral stalk. During catalysis, ATP synthesis in the catalytic domain of F(1) is coupled via a rotary mechanism of the central stalk subunits to proton translocation. Part of the complex F(0) domain and the peripheric stalk, which acts as a stator to hold the catalytic alpha(3)beta(3) subcomplex and subunit a/ATP6 static relative to the rotary elements. This Schizosaccharomyces pombe (strain 972 / ATCC 24843) (Fission yeast) protein is ATP synthase subunit d, mitochondrial (atp7).